The sequence spans 574 residues: Arginine--tRNA ligase (574 aa).

Residues 126-136 carry the 'HIGH' region motif; sequence PNIAKRMHVGH.

It belongs to the class-I aminoacyl-tRNA synthetase family. Monomer.

It localises to the cytoplasm. The catalysed reaction is tRNA(Arg) + L-arginine + ATP = L-arginyl-tRNA(Arg) + AMP + diphosphate. The polypeptide is Arginine--tRNA ligase (Chloroflexus aggregans (strain MD-66 / DSM 9485)).